We begin with the raw amino-acid sequence, 1203 residues long: MPRVVLNGVTVDFPFQPYPCQQEYMTKVLECLQKKVNGILESPTGTGKTLCLLCSTLAWQQHLRDAISSLKIAERVQGELFASRTLSSWGSAAAASGDSIECYTDIPKIIYASRTHSQPTQVIRELRNTAYRPKVCVLGSREQLCIHPEVKKQESNHMQISLCRKKVASRSCHFYNNVEAKFLEQDLATPILDIEDLVKNGSKQKMCPYYLSRNMKQQADIIFMPYNYLLDAKSRKAHSIDLKGTVVIFDEAHNVEKICEESASFDLTPRDVASGLEIINQVLEEQARVTQQGELQQEFIVDTSSSGLNMELEDIAKLKMILLRLEEAIDAVQLPGDDRGVTKPGSYIFELFAEAQITFQTKGCILESLDQIIQHLAGRTGVFTNTAGLQKLMDIIQIVFSVDPPEGSPGSLVGLGISHSYKVHIHPETSHRRAAKRSDAWSTTASRKQGKVLSYWCFSPSQSMRELVCQGVRTLILTSGTLAPLSSFALEKQIPFPVCLENPHIIDKNQLWVGIVPRGPDGVQLSSAYDKRFSEECLSSLGKALSNIARVVPHGLLVFFPSYPVMEKSLEFWQVQGLARKVEALKPLFVEPRNKGSFSEVIDAYYQQVASPASNGATFLAVCRGKASEGLDFSDMNGRGVIVTGLPYPPRMDPRVVLKMQFLDEMRGRSGVGGQCLSGQEWYQQQASRAVNQAIGRVIRHRHDYGAIFLCDHRFAYADARAQLPSWVRPYLKVYDNFGHAIRDVAQFLRVAQKTMPLPVPQAVTSSVSEGEIALKDATLSSYSLSTRKAISLDVHVPSLRQKSIGLPAAGDPESSLCGEYEQQTFSAQQRPMGLLAALEYNEQKAGASEEQALGSSTPSLRFEKRLSTEQKGGRKKVRLVNHPEEPMAGTQAGRAKMFMVAVKQALSQANFDTFTQALQHYKSSDDFEALVASLTCLFAEDPKKHTLLKGFYQFVRPHHKQQFEDICFQLTGQRCGYQPGKSELESKLTLSEGVDRQLDPGQHLNHGQPHLSAHPTSKGHTSHCTKVGCAVEKPGQPAVSDYLSDVHKALGSASCNQLTAALRAYKQDDDLDKVVAVVAALTTAKPEHLPLLQRFGMFVRRHHKPQFLQTCADLMGLPTTGKDLELEGPRDESPTVPPELTHEDLKPGPSMSKKPEKTQSKISSFFRQRPDESVRSDDTTPKPMQLPPRLPHELMKPHRSKQ.

The region spanning 7-296 (NGVTVDFPFQ…ARVTQQGELQ (290 aa)) is the Helicase ATP-binding domain. 42–49 (SPTGTGKT) is an ATP binding site. The [4Fe-4S] cluster site is built by Cys145, Cys163, Cys172, and Cys207. The Nuclear localization signal signature appears at 151-167 (KKQESNHMQISLCRKKV). The DEAH box motif lies at 250-253 (DEAH). Residues 871 to 877 (QKGGRKK) carry the Nuclear localization signal motif. Disordered regions lie at residues 998-1020 (QLDPGQHLNHGQPHLSAHPTSKG) and 1120-1203 (TTGK…RSKQ). The span at 1123-1134 (KDLELEGPRDES) shows a compositional bias: basic and acidic residues. Residues 1160-1167 (QSKISSFF) carry the PIP-box motif. Positions 1169-1181 (QRPDESVRSDDTT) are enriched in basic and acidic residues.

This sequence belongs to the helicase family. RAD3/XPD subfamily. Interacts with TERF1. Interacts (via PIP-box) with PCNA; the interaction is direct and essential for suppressing telomere fragility. Interacts with MMS19; the interaction mediates the association of RTEL1 with the cytosolic iron-sulfur protein assembly (CIA) complex.

It localises to the nucleus. The catalysed reaction is ATP + H2O = ADP + phosphate + H(+). Functionally, a probable ATP-dependent DNA helicase implicated in telomere-length regulation, DNA repair and the maintenance of genomic stability. Acts as an anti-recombinase to counteract toxic recombination and limit crossover during meiosis. Regulates meiotic recombination and crossover homeostasis by physically dissociating strand invasion events and thereby promotes noncrossover repair by meiotic synthesis dependent strand annealing (SDSA) as well as disassembly of D loop recombination intermediates. Also disassembles T loops and prevents telomere fragility by counteracting telomeric G4-DNA structures, which together ensure the dynamics and stability of the telomere. In Mus spretus (Western Mediterranean mouse), this protein is Regulator of telomere elongation helicase 1 (Rtel1).